The chain runs to 151 residues: 3-hydroxyacyl-[acyl-carrier-protein] dehydratase FabZ (151 aa).

Histidine 56 is a catalytic residue.

This sequence belongs to the thioester dehydratase family. FabZ subfamily.

It is found in the cytoplasm. The enzyme catalyses a (3R)-hydroxyacyl-[ACP] = a (2E)-enoyl-[ACP] + H2O. Involved in unsaturated fatty acids biosynthesis. Catalyzes the dehydration of short chain beta-hydroxyacyl-ACPs and long chain saturated and unsaturated beta-hydroxyacyl-ACPs. This Rhodopseudomonas palustris (strain HaA2) protein is 3-hydroxyacyl-[acyl-carrier-protein] dehydratase FabZ.